The sequence spans 636 residues: Chaperone protein DnaK (636 aa).

Thr-198 is subject to Phosphothreonine; by autocatalysis. Residues 600-636 (IAQQQAQAQQGSAEAGAQSQEDDVVDAEFEEVKDDKK) are disordered. The span at 601 to 618 (AQQQAQAQQGSAEAGAQS) shows a compositional bias: low complexity. Residues 619 to 636 (QEDDVVDAEFEEVKDDKK) show a composition bias toward acidic residues.

Belongs to the heat shock protein 70 family.

In terms of biological role, acts as a chaperone. This Vibrio vulnificus (strain CMCP6) protein is Chaperone protein DnaK.